A 350-amino-acid chain; its full sequence is GDSL esterase/lipase At2g04570 (350 aa).

Positions 1–23 are cleaved as a signal peptide; the sequence is MGHLKSLFTILFLIAMSSTVTFA. The active-site Nucleophile is Ser-35. Asn-98 and Asn-117 each carry an N-linked (GlcNAc...) asparagine glycan. Active-site residues include Asp-325 and His-328. Asn-343 is a glycosylation site (N-linked (GlcNAc...) asparagine).

It belongs to the 'GDSL' lipolytic enzyme family.

The protein localises to the secreted. In Arabidopsis thaliana (Mouse-ear cress), this protein is GDSL esterase/lipase At2g04570.